The chain runs to 248 residues: Large ribosomal subunit protein bL9m (248 aa).

The N-terminal 25 residues, 1 to 25 (MLKNIYVTPLNLLKSATSLQQQVRT), are a transit peptide targeting the mitochondrion.

This sequence belongs to the bacterial ribosomal protein bL9 family. As to quaternary structure, component of the mitochondrial ribosome large subunit (39S) which comprises a 16S rRNA and about 50 distinct proteins.

The protein localises to the mitochondrion. This Drosophila melanogaster (Fruit fly) protein is Large ribosomal subunit protein bL9m (mRpL9).